Here is a 161-residue protein sequence, read N- to C-terminus: Large ribosomal subunit protein uL10 (161 aa).

The protein belongs to the universal ribosomal protein uL10 family. In terms of assembly, part of the ribosomal stalk of the 50S ribosomal subunit. The N-terminus interacts with L11 and the large rRNA to form the base of the stalk. The C-terminus forms an elongated spine to which L12 dimers bind in a sequential fashion forming a multimeric L10(L12)X complex.

Its function is as follows. Forms part of the ribosomal stalk, playing a central role in the interaction of the ribosome with GTP-bound translation factors. The chain is Large ribosomal subunit protein uL10 (rplJ) from Mycoplasma pneumoniae (strain ATCC 29342 / M129 / Subtype 1) (Mycoplasmoides pneumoniae).